The chain runs to 96 residues: Co-chaperonin GroES (96 aa).

This sequence belongs to the GroES chaperonin family. As to quaternary structure, heptamer of 7 subunits arranged in a ring. Interacts with the chaperonin GroEL.

The protein localises to the cytoplasm. Functionally, together with the chaperonin GroEL, plays an essential role in assisting protein folding. The GroEL-GroES system forms a nano-cage that allows encapsulation of the non-native substrate proteins and provides a physical environment optimized to promote and accelerate protein folding. GroES binds to the apical surface of the GroEL ring, thereby capping the opening of the GroEL channel. The protein is Co-chaperonin GroES of Legionella jeonii.